A 527-amino-acid polypeptide reads, in one-letter code: N-acetylglucosamine-1-phosphodiester alpha-N-acetylglucosaminidase (527 aa).

The N-terminal stretch at 1-25 (MASSMGRFLLFFIALRGFLLEASGD) is a signal peptide. A propeptide spans 26-49 (FGSGASRDDDVLLPYSRARARLAR) (removed in mature form). Residues 50 to 463 (DCTRVHAGRL…SLLTRTTWLA (414 aa)) are Lumenal-facing. 5 cysteine pairs are disulfide-bonded: Cys-116-Cys-149, Cys-133-Cys-324, Cys-308-Cys-315, Cys-363-Cys-374, and Cys-381-Cys-390. 3 N-linked (GlcNAc...) asparagine glycosylation sites follow: Asn-209, Asn-215, and Asn-297. Residues 359-391 (DKLDCGPANCSQHGLCTETGCRCEAGWTGSNCS) enclose the EGF-like domain. Residues Asn-367, Asn-389, and Asn-421 are each glycosylated (N-linked (GlcNAc...) asparagine). The helical transmembrane segment at 464–484 (ITLALAFLLLISTAANVSLFL) threads the bilayer. The Cytoplasmic portion of the chain corresponds to 485 to 527 (GSRAARRRHLDGAYVYHPLQEVNGEHPAAEKEQLGDSSNPFKD). Residues 498–505 (YVYHPLQE) are mediates the interaction with AP4M1. Positions 500–503 (YHPL) match the Tyrosine-based internalization motif motif. The short motif at 523 to 527 (NPFKD) is the NPF internalization motif element.

In terms of assembly, homotetramer arranged as two disulfide-linked homodimers. Interacts with AP4M1. Glycosylated. Contains complex N-linked oligosaccharides with appreciable amounts of sialic acid. In terms of processing, the precursor is cleaved and activated in the trans-Golgi network by a furin endopeptidase.

It is found in the golgi apparatus. Its subcellular location is the golgi stack membrane. The protein resides in the trans-Golgi network. The catalysed reaction is N(4)-[6-(N-acetyl-alpha-D-glucosaminyl-1-phospho)-alpha-D-mannosyl-(1-&gt;2)-alpha-D-mannosyl-(glycan)]-L-asparaginyl-[protein] + H2O = N(4)-[6-phospho-alpha-D-mannosyl-(1-&gt;2)-alpha-D-mannosyl-(glycan)]-L-asparaginyl-[protein] + N-acetyl-D-glucosamine + H(+). The protein operates within protein modification; protein glycosylation. Functionally, catalyzes the second step in the formation of the mannose 6-phosphate targeting signal on lysosomal enzyme oligosaccharides by removing GlcNAc residues from GlcNAc-alpha-P-mannose moieties, which are formed in the first step. Also hydrolyzes UDP-GlcNAc, a sugar donor for Golgi N-acetylglucosaminyltransferases. This chain is N-acetylglucosamine-1-phosphodiester alpha-N-acetylglucosaminidase (NAGPA), found in Bos taurus (Bovine).